Here is a 350-residue protein sequence, read N- to C-terminus: 3-dehydroquinate synthase (350 aa).

NAD(+) contacts are provided by residues 106-110 (GVVGD), 130-131 (TS), Lys-143, and Lys-152. Glu-185, His-246, and His-263 together coordinate Zn(2+).

This sequence belongs to the sugar phosphate cyclases superfamily. Dehydroquinate synthase family. Co(2+) is required as a cofactor. Requires Zn(2+) as cofactor. The cofactor is NAD(+).

The protein localises to the cytoplasm. It carries out the reaction 7-phospho-2-dehydro-3-deoxy-D-arabino-heptonate = 3-dehydroquinate + phosphate. It functions in the pathway metabolic intermediate biosynthesis; chorismate biosynthesis; chorismate from D-erythrose 4-phosphate and phosphoenolpyruvate: step 2/7. Catalyzes the conversion of 3-deoxy-D-arabino-heptulosonate 7-phosphate (DAHP) to dehydroquinate (DHQ). This Clostridium perfringens (strain SM101 / Type A) protein is 3-dehydroquinate synthase.